The primary structure comprises 243 residues: Terpene cyclase penB (243 aa).

The next 3 helical transmembrane spans lie at 19-39, 48-68, and 78-98; these read IANI…VGMI, YGMA…YSLI, and GVFI…IKFA. Asn-111 is a glycosylation site (N-linked (GlcNAc...) asparagine). A run of 4 helical transmembrane segments spans residues 112 to 132, 137 to 157, 172 to 194, and 205 to 225; these read LSLI…ALAA, SLAY…GGLC, LWLS…WMYW, and LVLW…LCYW.

The protein belongs to the paxB family.

It is found in the membrane. It functions in the pathway secondary metabolite biosynthesis. In terms of biological role, terpene cyclase; part of the gene cluster that mediates the biosynthesis of the indole diterpenes penitrems. The geranylgeranyl diphosphate (GGPP) synthase penG catalyzes the first step in penitrem biosynthesis via conversion of farnesyl pyrophosphate and isopentyl pyrophosphate into geranylgeranyl pyrophosphate (GGPP). Condensation of indole-3-glycerol phosphate with GGPP by the prenyl transferase penC then forms 3-geranylgeranylindole (3-GGI). Epoxidation by the FAD-dependent monooxygenase penM leads to a epoxidized-GGI that is substrate of the terpene cyclase penB for cyclization to yield paspaline. Paspaline is subsequently converted to 13-desoxypaxilline by the cytochrome P450 monooxygenase penP, the latter being then converted to paxilline by the cytochrome P450 monooxygenase penQ. Paxilline is converted to beta-paxitriol via C-10 ketoreduction by the short-chain dehydrogenase PC-15 which can be monoprenylated at the C-20 by the indole diterpene prenyltransferase penD. A two-step elimination (acetylation and elimination) process performed by the O-acetyltransferase PC-16 and the P.simplicissimum ptmI-ortholog not yet identified in P.crustosum, leads to the production of the prenylated form of penijanthine. The FAD-linked oxidoreductase ptmO then converts the prenylated form of penijanthine into PC-M5 which is in turn transformed into PC-M4 by the aromatic dimethylallyltransferase PC-22. A series of oxidation steps involving 4 cytochrome P450 monooxygenases (PC-21, PC-05, PC-23, PC-20) and a FAD-dependent monooxygenase (PC-14) are required for the transformation of PC-M4 to penitrems A and E. Synthesis of these final products is proposed to proceed via penitrems D and C (PC-21, PC-05, PC-14) and penitrems B and F (PC-21, PC-05, PC-14, PC-23). This is Terpene cyclase penB (penB) from Penicillium crustosum (Blue mold fungus).